Here is a 139-residue protein sequence, read N- to C-terminus: D-ribose pyranase (139 aa).

Histidine 20 serves as the catalytic Proton donor. Substrate-binding positions include aspartate 28, histidine 106, and 128-130 (YAN).

It belongs to the RbsD / FucU family. RbsD subfamily. Homodecamer.

It localises to the cytoplasm. The enzyme catalyses beta-D-ribopyranose = beta-D-ribofuranose. It functions in the pathway carbohydrate metabolism; D-ribose degradation; D-ribose 5-phosphate from beta-D-ribopyranose: step 1/2. Functionally, catalyzes the interconversion of beta-pyran and beta-furan forms of D-ribose. The sequence is that of D-ribose pyranase from Photorhabdus laumondii subsp. laumondii (strain DSM 15139 / CIP 105565 / TT01) (Photorhabdus luminescens subsp. laumondii).